Here is a 562-residue protein sequence, read N- to C-terminus: Carboxylesterase 1E (562 aa).

The first 19 residues, 1–19 (MCLSALILVSLAAFTAGAG), serve as a signal peptide directing secretion. Residue asparagine 80 is glycosylated (N-linked (GlcNAc...) asparagine). Cysteine 88 and cysteine 117 are joined by a disulfide. The Acyl-ester intermediate role is filled by serine 222. Residues cysteine 274 and cysteine 285 are joined by a disulfide bond. N-linked (GlcNAc...) asparagine glycosylation occurs at asparagine 276. Catalysis depends on charge relay system residues glutamate 354 and histidine 467. The N-linked (GlcNAc...) asparagine glycan is linked to asparagine 490. Residues 559-562 (HTEL) carry the Prevents secretion from ER motif.

Belongs to the type-B carboxylesterase/lipase family.

It localises to the endoplasmic reticulum lumen. Its subcellular location is the microsome membrane. It catalyses the reaction a carboxylic ester + H2O = an alcohol + a carboxylate + H(+). The enzyme catalyses all-trans-retinyl hexadecanoate + H2O = all-trans-retinol + hexadecanoate + H(+). In terms of biological role, involved in the detoxification of xenobiotics and in the activation of ester and amide prodrugs. Hydrolyzes retinyl esters. In Mus musculus (Mouse), this protein is Carboxylesterase 1E.